The primary structure comprises 161 residues: Deoxyuridine 5'-triphosphate nucleotidohydrolase (161 aa).

Substrate is bound by residues 80-82, Asn-93, 97-99, and Lys-107; these read RSG and TVD.

It belongs to the dUTPase family. Mg(2+) serves as cofactor.

The catalysed reaction is dUTP + H2O = dUMP + diphosphate + H(+). It functions in the pathway pyrimidine metabolism; dUMP biosynthesis; dUMP from dCTP (dUTP route): step 2/2. Its function is as follows. This enzyme is involved in nucleotide metabolism: it produces dUMP, the immediate precursor of thymidine nucleotides and it decreases the intracellular concentration of dUTP so that uracil cannot be incorporated into DNA. The protein is Deoxyuridine 5'-triphosphate nucleotidohydrolase of Mesorhizobium japonicum (strain LMG 29417 / CECT 9101 / MAFF 303099) (Mesorhizobium loti (strain MAFF 303099)).